The sequence spans 93 residues: uncharacterized protein (93 aa).

This is an uncharacterized protein from Homo sapiens (Human).